Consider the following 108-residue polypeptide: Class I hydrophobin hgfII (108 aa).

Positions 1–19 (MFSRIAAVSFLALPLLAAA) are cleaved as a signal peptide. Cystine bridges form between C28/C89, C35/C83, C36/C69, and C90/C103. N-linked (GlcNAc...) asparagine glycosylation occurs at N92.

This sequence belongs to the fungal hydrophobin family. In terms of assembly, self-assembles to form functional amyloid fibrils called rodlets with a diameter of 15-30 nm. Self-assembly into fibrillar rodlets occurs spontaneously at hydrophobic:hydrophilic interfaces and the rodlets further associate laterally to form amphipathic monolayers. In terms of tissue distribution, highky expressed in hyphae cultured in liquid medium.

It localises to the secreted. It is found in the cell wall. In terms of biological role, aerial growth, conidiation, and dispersal of filamentous fungi in the environment rely upon a capability of their secreting small amphipathic proteins called hydrophobins (HPBs) with low sequence identity. Class I can self-assemble into an outermost layer of rodlet bundles on aerial cell surfaces, conferring cellular hydrophobicity that supports fungal growth, development and dispersal; whereas Class II form highly ordered films at water-air interfaces through intermolecular interactions but contribute nothing to the rodlet structure. HgfII is a class I hydrophobin that is involved in cell surface hydrophobicity and might play a key role during the growth and development of hyphae cultured in liquid medium. In Grifola frondosa (Maitake), this protein is Class I hydrophobin hgfII.